Consider the following 264-residue polypeptide: MSEKLKLHGFNNLTKSLSFNIYDICYAQSEKHRQEYIAYIDEQYNAERLTQILTDVVEIIGAHILNVSRQDYDPHGASVTMLIAEHEVPPPADSSEESPGPLPDAVVAHLDKSHVTVHTYPESHPDNGISTFRADIDVSTCGLISPLKALNYLIHSFDSDIVTIDYRVRGFTRDIDGAKLYIDHDINSIQNFLSEDTQEAYQMIDVNVYQENLFHTKMILKEFNLDNYLFGTGVSELNANEASNIRERLQKEMLEIFYSRNMPY.

Serine 113 serves as the catalytic Schiff-base intermediate with substrate; via pyruvic acid. The residue at position 113 (serine 113) is a Pyruvic acid (Ser); by autocatalysis. Catalysis depends on histidine 118, which acts as the Proton acceptor; for processing activity. Residue cysteine 141 is the Proton donor; for catalytic activity of the active site.

The protein belongs to the prokaryotic AdoMetDC family. Type 2 subfamily. As to quaternary structure, heterooctamer of four alpha and four beta chains arranged as a tetramer of alpha/beta heterodimers. Pyruvate is required as a cofactor. In terms of processing, is synthesized initially as an inactive proenzyme. Formation of the active enzyme involves a self-maturation process in which the active site pyruvoyl group is generated from an internal serine residue via an autocatalytic post-translational modification. Two non-identical subunits are generated from the proenzyme in this reaction, and the pyruvate is formed at the N-terminus of the alpha chain, which is derived from the carboxyl end of the proenzyme. The post-translation cleavage follows an unusual pathway, termed non-hydrolytic serinolysis, in which the side chain hydroxyl group of the serine supplies its oxygen atom to form the C-terminus of the beta chain, while the remainder of the serine residue undergoes an oxidative deamination to produce ammonia and the pyruvoyl group blocking the N-terminus of the alpha chain.

It carries out the reaction S-adenosyl-L-methionine + H(+) = S-adenosyl 3-(methylsulfanyl)propylamine + CO2. The protein operates within amine and polyamine biosynthesis; S-adenosylmethioninamine biosynthesis; S-adenosylmethioninamine from S-adenosyl-L-methionine: step 1/1. Its function is as follows. Catalyzes the decarboxylation of S-adenosylmethionine to S-adenosylmethioninamine (dcAdoMet), the propylamine donor required for the synthesis of the polyamines spermine and spermidine from the diamine putrescine. In Hahella chejuensis (strain KCTC 2396), this protein is S-adenosylmethionine decarboxylase proenzyme.